The sequence spans 273 residues: 4-hydroxy-tetrahydrodipicolinate reductase (273 aa).

Residues 12–17 (GAGGRM) and glutamate 38 each bind NAD(+). Residue arginine 39 participates in NADP(+) binding. NAD(+) contacts are provided by residues 102–104 (GTT) and 126–129 (AANF). The active-site Proton donor/acceptor is histidine 159. Histidine 160 contacts (S)-2,3,4,5-tetrahydrodipicolinate. Lysine 163 acts as the Proton donor in catalysis. A (S)-2,3,4,5-tetrahydrodipicolinate-binding site is contributed by 169 to 170 (GT).

This sequence belongs to the DapB family. As to quaternary structure, homotetramer.

The protein localises to the cytoplasm. It carries out the reaction (S)-2,3,4,5-tetrahydrodipicolinate + NAD(+) + H2O = (2S,4S)-4-hydroxy-2,3,4,5-tetrahydrodipicolinate + NADH + H(+). It catalyses the reaction (S)-2,3,4,5-tetrahydrodipicolinate + NADP(+) + H2O = (2S,4S)-4-hydroxy-2,3,4,5-tetrahydrodipicolinate + NADPH + H(+). It participates in amino-acid biosynthesis; L-lysine biosynthesis via DAP pathway; (S)-tetrahydrodipicolinate from L-aspartate: step 4/4. Catalyzes the conversion of 4-hydroxy-tetrahydrodipicolinate (HTPA) to tetrahydrodipicolinate. This is 4-hydroxy-tetrahydrodipicolinate reductase from Pectobacterium atrosepticum (strain SCRI 1043 / ATCC BAA-672) (Erwinia carotovora subsp. atroseptica).